We begin with the raw amino-acid sequence, 386 residues long: Succinate--CoA ligase [ADP-forming] subunit beta (386 aa).

Residues Lys9 to Ala235 enclose the ATP-grasp domain. ATP-binding positions include Lys44, Gly51 to Gly53, Ala93, and Glu98. 2 residues coordinate Mg(2+): Asn190 and Asp204. Residues Asn255 and Gly317–Thr319 contribute to the substrate site.

The protein belongs to the succinate/malate CoA ligase beta subunit family. In terms of assembly, heterotetramer of two alpha and two beta subunits. It depends on Mg(2+) as a cofactor.

The enzyme catalyses succinate + ATP + CoA = succinyl-CoA + ADP + phosphate. It carries out the reaction GTP + succinate + CoA = succinyl-CoA + GDP + phosphate. It participates in carbohydrate metabolism; tricarboxylic acid cycle; succinate from succinyl-CoA (ligase route): step 1/1. Succinyl-CoA synthetase functions in the citric acid cycle (TCA), coupling the hydrolysis of succinyl-CoA to the synthesis of either ATP or GTP and thus represents the only step of substrate-level phosphorylation in the TCA. The beta subunit provides nucleotide specificity of the enzyme and binds the substrate succinate, while the binding sites for coenzyme A and phosphate are found in the alpha subunit. The protein is Succinate--CoA ligase [ADP-forming] subunit beta of Nocardioides sp. (strain ATCC BAA-499 / JS614).